A 159-amino-acid polypeptide reads, in one-letter code: Endoribonuclease YbeY (159 aa).

H122, H126, and H132 together coordinate Zn(2+).

Belongs to the endoribonuclease YbeY family. Zn(2+) serves as cofactor.

It is found in the cytoplasm. In terms of biological role, single strand-specific metallo-endoribonuclease involved in late-stage 70S ribosome quality control and in maturation of the 3' terminus of the 16S rRNA. The polypeptide is Endoribonuclease YbeY (Roseiflexus castenholzii (strain DSM 13941 / HLO8)).